The sequence spans 320 residues: Ribose-phosphate pyrophosphokinase 1 (320 aa).

ATP-binding positions include 39–41 (DGE) and 98–99 (RQ). Positions 132 and 173 each coordinate Mg(2+). Residue Lys-196 is part of the active site. D-ribose 5-phosphate-binding positions include Arg-198, Asp-224, and 228–232 (DTAGT).

This sequence belongs to the ribose-phosphate pyrophosphokinase family. Class I subfamily. In terms of assembly, homohexamer. Mg(2+) serves as cofactor.

The protein localises to the cytoplasm. The catalysed reaction is D-ribose 5-phosphate + ATP = 5-phospho-alpha-D-ribose 1-diphosphate + AMP + H(+). It functions in the pathway metabolic intermediate biosynthesis; 5-phospho-alpha-D-ribose 1-diphosphate biosynthesis; 5-phospho-alpha-D-ribose 1-diphosphate from D-ribose 5-phosphate (route I): step 1/1. Its function is as follows. Involved in the biosynthesis of the central metabolite phospho-alpha-D-ribosyl-1-pyrophosphate (PRPP) via the transfer of pyrophosphoryl group from ATP to 1-hydroxyl of ribose-5-phosphate (Rib-5-P). The protein is Ribose-phosphate pyrophosphokinase 1 of Streptococcus pyogenes serotype M1.